A 168-amino-acid polypeptide reads, in one-letter code: DOMON domain-containing protein Y73F4A.2 (168 aa).

The first 18 residues, 1 to 18 (MFRSIAVLSALLFAFASA), serve as a signal peptide directing secretion. Residues 26–143 (SDFEVYWRFA…CQKWRFVKSG (118 aa)) form the DOMON domain. Asparagine 36 carries N-linked (GlcNAc...) asparagine glycosylation. Positions 148–168 (GQLTRNDKSPKEKKVCPMECN) are disordered. Residues 152–168 (RNDKSPKEKKVCPMECN) are compositionally biased toward basic and acidic residues.

The protein localises to the secreted. This is DOMON domain-containing protein Y73F4A.2 from Caenorhabditis elegans.